Here is a 324-residue protein sequence, read N- to C-terminus: tRNA U34 carboxymethyltransferase (324 aa).

Carboxy-S-adenosyl-L-methionine contacts are provided by residues lysine 91, tryptophan 105, lysine 110, glycine 130, 152–154 (DPS), 181–182 (IE), methionine 196, tyrosine 200, and arginine 315.

Belongs to the class I-like SAM-binding methyltransferase superfamily. CmoB family. As to quaternary structure, homotetramer.

The catalysed reaction is carboxy-S-adenosyl-L-methionine + 5-hydroxyuridine(34) in tRNA = 5-carboxymethoxyuridine(34) in tRNA + S-adenosyl-L-homocysteine + H(+). Catalyzes carboxymethyl transfer from carboxy-S-adenosyl-L-methionine (Cx-SAM) to 5-hydroxyuridine (ho5U) to form 5-carboxymethoxyuridine (cmo5U) at position 34 in tRNAs. The sequence is that of tRNA U34 carboxymethyltransferase from Aliivibrio fischeri (strain ATCC 700601 / ES114) (Vibrio fischeri).